A 576-amino-acid chain; its full sequence is Small ribosomal subunit protein mS80 (rPPR6) (576 aa).

The N-terminal 76 residues, 1 to 76 (MLRSFLCRSQ…SLPADEIPIS (76 aa)), are a transit peptide targeting the mitochondrion. PPR repeat units lie at residues 230 to 264 (NLEI…GFTP), 265 to 299 (NAKT…GVLS), 300 to 336 (EGEQ…SLPP), 341 to 370 (TLIT…ARRR), 371 to 405 (GIKP…GPAP), 406 to 440 (GNAV…GLKP), 441 to 475 (DVYT…HKKL), 476 to 510 (SPVT…GVQP), and 511 to 546 (NADE…GLHL).

Belongs to the PPR family. P subfamily. In terms of assembly, component of the mitochondrial ribosome small subunit.

Its subcellular location is the mitochondrion. This is Small ribosomal subunit protein mS80 (rPPR6) from Arabidopsis thaliana (Mouse-ear cress).